Consider the following 135-residue polypeptide: Hemoglobin subunit beta-2 (135 aa).

The Globin domain occupies 2–135; the sequence is HWTAEEKALV…VVDALSKGYH (134 aa). Positions 57 and 81 each coordinate heme b.

The protein belongs to the globin family. As to quaternary structure, hb 2 is a heterotetramer of two alpha and two beta-2 chains. As to expression, red blood cells (at protein level).

In terms of biological role, involved in oxygen transport from gills to the various peripheral tissues. The protein is Hemoglobin subunit beta-2 of Somniosus microcephalus (Greenland sleeper shark).